We begin with the raw amino-acid sequence, 52 residues long: MKRQKRDRLARALSRGYHAGILGRPRENCPYHSLDARSYWLGGWRQAKEDRV.

Belongs to the ribosome modulation factor family.

It is found in the cytoplasm. In terms of biological role, during stationary phase, converts 70S ribosomes to an inactive dimeric form (100S ribosomes). The chain is Ribosome modulation factor from Xenorhabdus nematophila (strain ATCC 19061 / DSM 3370 / CCUG 14189 / LMG 1036 / NCIMB 9965 / AN6).